Here is a 218-residue protein sequence, read N- to C-terminus: Probable GTP-binding protein EngB (218 aa).

The 178-residue stretch at 23 to 200 folds into the EngB-type G domain; the sequence is EVPEIAFVGR…AQLLWQWAHP (178 aa). GTP-binding positions include 31–38, 58–62, 80–83, 150–153, and 179–181; these read GRSNAGKS, GRTQH, DLPG, TKAD, and FSA. Serine 38 and threonine 60 together coordinate Mg(2+).

Belongs to the TRAFAC class TrmE-Era-EngA-EngB-Septin-like GTPase superfamily. EngB GTPase family. Mg(2+) serves as cofactor.

In terms of biological role, necessary for normal cell division and for the maintenance of normal septation. The chain is Probable GTP-binding protein EngB from Acidovorax ebreus (strain TPSY) (Diaphorobacter sp. (strain TPSY)).